We begin with the raw amino-acid sequence, 179 residues long: Large ribosomal subunit protein uL5 (179 aa).

This sequence belongs to the universal ribosomal protein uL5 family. In terms of assembly, part of the 50S ribosomal subunit; part of the 5S rRNA/L5/L18/L25 subcomplex. Contacts the 5S rRNA and the P site tRNA. Forms a bridge to the 30S subunit in the 70S ribosome.

This is one of the proteins that bind and probably mediate the attachment of the 5S RNA into the large ribosomal subunit, where it forms part of the central protuberance. In the 70S ribosome it contacts protein S13 of the 30S subunit (bridge B1b), connecting the 2 subunits; this bridge is implicated in subunit movement. Contacts the P site tRNA; the 5S rRNA and some of its associated proteins might help stabilize positioning of ribosome-bound tRNAs. The protein is Large ribosomal subunit protein uL5 of Clostridium novyi (strain NT).